We begin with the raw amino-acid sequence, 229 residues long: Probable calcium-binding protein CML22 (229 aa).

4 consecutive EF-hand domains span residues 53–88, 89–124, 145–180, and 184–219; these read EGLRNIRSVFESYDNDTNGTIDIEELKKCLEELKLS, LSDEEVKGLYSWCDVDGSKGIQFNEFIVLLCLIYLL, SIFDPIVEVFLFLDKDGKGKLNKADVIKTLNNEDYP, and SPSHVTNMRFEEMDWGRKGKVGFREFLFAFMSWVGL. Ca(2+)-binding residues include aspartate 66, aspartate 68, asparagine 70, threonine 72, and glutamate 77.

In terms of biological role, potential calcium sensor. This is Probable calcium-binding protein CML22 (CML22) from Arabidopsis thaliana (Mouse-ear cress).